A 195-amino-acid chain; its full sequence is Thymidine kinase (195 aa).

Residues 15–22 and 88–91 each bind ATP; these read GSMFSGKS and DEVQ. Catalysis depends on Glu-89, which acts as the Proton acceptor. Positions 145, 148, 183, and 186 each coordinate Zn(2+).

This sequence belongs to the thymidine kinase family. As to quaternary structure, homotetramer.

The protein resides in the cytoplasm. It catalyses the reaction thymidine + ATP = dTMP + ADP + H(+). This Bacillus cereus (strain 03BB102) protein is Thymidine kinase.